The chain runs to 160 residues: Ubiquitin-like protein ATG12 (160 aa).

The segment at 1–40 is disordered; sequence MSETPKDQGPSSPSPSPSPSAASPMPLADNEVAGSGASSP. Glycine 160 participates in a covalent cross-link: Glycyl lysine isopeptide (Gly-Lys) (interchain with K-102 in ATG5).

The protein belongs to the ATG12 family. Forms a conjugate with ATG5. Forms a thioester bond with the 'Cys-196' of ATG10. Interacts with the ATG7 C-terminal 40 amino acids domain. The ATG12-ATG5 conjugate forms a complex with several units of ATG16. The ATG12-ATG5 conjugate also associates with ATG3.

It localises to the preautophagosomal structure membrane. Ubiquitin-like protein involved in cytoplasm to vacuole transport (Cvt), autophagy vesicles formation, mitophagy, and nucleophagy. Conjugation with ATG5 through a ubiquitin-like conjugating system involving also ATG7 as an E1-like activating enzyme and ATG10 as an E2-like conjugating enzyme, is essential for its function. The ATG12-ATG5 conjugate acts as an E3-like enzyme which is required for lipidation of ATG8 and ATG8 association to the vesicle membranes. ATG12-ATG5 rearranges the ATG3 catalytic center and enhances its E2 activity. Autophagy is required for proper vegetative growth, asexual/sexual reproduction, and full virulence. Autophagy is particularly involved in the biosynthesis of deoxynivalenol (DON), an important virulence determinant. In Gibberella zeae (strain ATCC MYA-4620 / CBS 123657 / FGSC 9075 / NRRL 31084 / PH-1) (Wheat head blight fungus), this protein is Ubiquitin-like protein ATG12.